The primary structure comprises 1151 residues: Calcium-activated potassium channel subunit alpha-1 (1151 aa).

Residues 1–36 form a disordered region; sequence MSSNIHANHLSLDASSSSSSSSSSSSSSSSSSSVHE. Over 1-59 the chain is Extracellular; sequence MSSNIHANHLSLDASSSSSSSSSSSSSSSSSSSVHEPKMDALIIPVTMEVPCDSRGQRM. The span at 15–33 shows a compositional bias: low complexity; it reads SSSSSSSSSSSSSSSSSSS. A helical membrane pass occupies residues 60–80; it reads WWAFLASSMVTFFGGLFIILL. Over 81–151 the chain is Cytoplasmic; that stretch reads WRTLKYLWTV…MISAQTLTGR (71 aa). Residues Cys-91, Cys-92, and Cys-94 are each lipidated (S-palmitoyl cysteine). A helical transmembrane segment spans residues 152-172; that stretch reads VLVVLVFALSIGALVIYFIDS. Topologically, residues 173–187 are extracellular; that stretch reads SNPIESCQNFYKDFT. A helical membrane pass occupies residues 188 to 208; sequence LQIDMAFNVFFLLYFGLRFIA. The Cytoplasmic portion of the chain corresponds to 209 to 212; it reads ANDK. Residues 213–233 traverse the membrane as a helical segment; the sequence is LWFWLEVNSVVDFFTVPPVFV. The Extracellular portion of the chain corresponds to 234-237; sequence SVYL. Residues 238-258 traverse the membrane as a helical; Voltage-sensor segment; the sequence is NRSWLGLRFLRALRLIQFSEI. Topologically, residues 259–273 are cytoplasmic; it reads LQFLNILKTSNSIKL. A helical membrane pass occupies residues 274 to 294; that stretch reads VNLLSIFISTWLTAAGFIHLV. Residues 295–308 are Extracellular-facing; that stretch reads ENSGDPWENFQNNQ. An intramembrane region (pore-forming) is located at residues 309–331; sequence ALTYWECVYLLMVTMSTVGYGDV. A Selectivity for potassium motif is present at residues 325 to 328; sequence TVGY. The Extracellular portion of the chain corresponds to 332–340; it reads YAKTTLGRL. Residues 341-361 form a helical membrane-spanning segment; the sequence is FMVFFILGGLAMFASYVPEII. Topologically, residues 362 to 1151 are cytoplasmic; sequence ELIGNRKKYG…KQKYVQEERL (790 aa). The 143-residue stretch at 380 to 522 folds into the RCK N-terminal 1 domain; sequence RKHIVVCGHI…WNWKEGDDAI (143 aa). 3 residues coordinate Mg(2+): Glu-412, Gln-435, and Glu-437. The segment S7 stretch occupies residues 529-549; the sequence is LGFIAQSCLAQGLSTMLANLF. Positions 586–606 are segment S8; sequence LSFPTVCELCFVKLKLLMIAI. The tract at residues 650-654 is heme-binding motif; that stretch reads CKACH. The segment at 674–702 is disordered; sequence EQPSTLSPKKKQRNGGMRNSPNSSPKLMR. Thr-678 is subject to Phosphothreonine. Ser-680, Ser-693, and Ser-697 each carry phosphoserine. The tract at residues 752 to 772 is segment S9; sequence VLSGHVVVCIFGDVSSALIGL. The 145-residue stretch at 754–898 folds into the RCK N-terminal 2 domain; the sequence is SGHVVVCIFG…MDRSSPDNSP (145 aa). Thr-885 is subject to Phosphothreonine. A phosphoserine mark is found at Ser-893 and Ser-897. Residues 918 to 940 carry the Calcium bowl motif; sequence TELVNDTNVQFLDQDDDDDPDTE. Ca(2+) contacts are provided by Gln-927, Asp-930, Asp-933, and Asp-935. Residues 947–967 are segment S10; sequence FACGTAFAVSVLDSLMSATYF. The span at 1101–1126 shows a compositional bias: low complexity; the sequence is RASLSHSSHSSQSSSKKSSSVHSIPS. The interval 1101-1151 is disordered; the sequence is RASLSHSSHSSQSSSKKSSSVHSIPSTANRQNRPKSRESRDKQKYVQEERL. Over residues 1135 to 1151 the composition is skewed to basic and acidic residues; it reads KSRESRDKQKYVQEERL. Phosphoserine is present on residues Ser-1136 and Ser-1139.

This sequence belongs to the potassium channel family. Calcium-activated (TC 1.A.1.3) subfamily. KCa1.1/KCNMA1 sub-subfamily. Homotetramer; which constitutes the calcium-activated potassium channel. Interacts with beta subunits KCNMB1, KCNMB2, KCNMB3 and KCNMB4. Interacts with gamma subunits LRRC26, LRRC38, LRRC52 and LRRC55. Beta and gamma subunits are accessory, and modulate its activity. Interacts with RAB11B. In terms of processing, phosphorylated. Phosphorylation by kinases such as PKA and/or PKG. In smooth muscles, phosphorylation affects its activity. Post-translationally, palmitoylation by ZDHHC22 and ZDHHC23 within the intracellular linker between the S0 and S1 transmembrane domains regulates localization to the plasma membrane. Depalmitoylated by LYPLA1 and LYPLAL1, leading to retard exit from the trans-Golgi network.

It localises to the cell membrane. It catalyses the reaction K(+)(in) = K(+)(out). With respect to regulation, ethanol and carbon monoxide-bound heme increase channel activation. Heme inhibits channel activation. In terms of biological role, potassium channel activated by both membrane depolarization or increase in cytosolic Ca(2+) that mediates export of K(+). It is also activated by the concentration of cytosolic Mg(2+). Its activation dampens the excitatory events that elevate the cytosolic Ca(2+) concentration and/or depolarize the cell membrane. It therefore contributes to repolarization of the membrane potential. Plays a key role in controlling excitability in a number of systems, such as regulation of the contraction of smooth muscle, the tuning of hair cells in the cochlea, regulation of transmitter release, and innate immunity. In smooth muscles, its activation by high level of Ca(2+), caused by ryanodine receptors in the sarcoplasmic reticulum, regulates the membrane potential. In cochlea cells, its number and kinetic properties partly determine the characteristic frequency of each hair cell and thereby helps to establish a tonotopic map. Kinetics of KCNMA1 channels are determined by alternative splicing, phosphorylation status and its combination with modulating beta subunits. Highly sensitive to both iberiotoxin (IbTx) and charybdotoxin (CTX). This Macaca mulatta (Rhesus macaque) protein is Calcium-activated potassium channel subunit alpha-1 (KCNMA1).